The primary structure comprises 435 residues: Xylose isomerase (435 aa).

Catalysis depends on residues histidine 99 and aspartate 102. Mg(2+)-binding residues include glutamate 230, glutamate 266, histidine 269, aspartate 294, aspartate 305, aspartate 307, and aspartate 337.

This sequence belongs to the xylose isomerase family. In terms of assembly, homotetramer. Requires Mg(2+) as cofactor.

It is found in the cytoplasm. The catalysed reaction is alpha-D-xylose = alpha-D-xylulofuranose. The chain is Xylose isomerase from Listeria welshimeri serovar 6b (strain ATCC 35897 / DSM 20650 / CCUG 15529 / CIP 8149 / NCTC 11857 / SLCC 5334 / V8).